The following is a 270-amino-acid chain: 3-methyl-2-oxobutanoate hydroxymethyltransferase (270 aa).

Residues Asp-50 and Asp-89 each contribute to the Mg(2+) site. 3-methyl-2-oxobutanoate contacts are provided by residues 50–51 (DS), Asp-89, and Lys-118. Residue Glu-120 participates in Mg(2+) binding. Glu-187 (proton acceptor) is an active-site residue.

The protein belongs to the PanB family. As to quaternary structure, homodecamer; pentamer of dimers. Requires Mg(2+) as cofactor.

It localises to the cytoplasm. It carries out the reaction 3-methyl-2-oxobutanoate + (6R)-5,10-methylene-5,6,7,8-tetrahydrofolate + H2O = 2-dehydropantoate + (6S)-5,6,7,8-tetrahydrofolate. It functions in the pathway cofactor biosynthesis; (R)-pantothenate biosynthesis; (R)-pantoate from 3-methyl-2-oxobutanoate: step 1/2. In terms of biological role, catalyzes the reversible reaction in which hydroxymethyl group from 5,10-methylenetetrahydrofolate is transferred onto alpha-ketoisovalerate to form ketopantoate. This Helicobacter acinonychis (strain Sheeba) protein is 3-methyl-2-oxobutanoate hydroxymethyltransferase.